A 242-amino-acid polypeptide reads, in one-letter code: Probable transcriptional regulatory protein Csac_0964 (242 aa).

The disordered stretch occupies residues 1 to 20 (MSGHSKWANIRHKKEKTDAQ).

This sequence belongs to the TACO1 family.

The protein resides in the cytoplasm. This is Probable transcriptional regulatory protein Csac_0964 from Caldicellulosiruptor saccharolyticus (strain ATCC 43494 / DSM 8903 / Tp8T 6331).